Consider the following 397-residue polypeptide: uncharacterized protein (397 aa).

12 consecutive transmembrane segments (helical) span residues 10–30 (FIIF…YAVM), 48–68 (GLLV…VTII), 76–96 (PVLL…ALAP), 106–126 (ILSA…ASEM), 141–161 (GGLT…GDVL), 165–185 (AVFS…MAAV), 209–229 (LFSF…YTFI), 242–262 (VGIT…NFFA), 274–294 (MIGV…IAIY), 296–316 (AAAI…PPLL), 334–354 (VSVS…GMIL), and 363–383 (LFAG…FAHL).

Belongs to the major facilitator superfamily.

It is found in the cell membrane. This is an uncharacterized protein from Bacillus subtilis (strain 168).